Here is a 293-residue protein sequence, read N- to C-terminus: Pyridoxal 5'-phosphate synthase subunit PdxS (293 aa).

Aspartate 23 lines the D-ribose 5-phosphate pocket. Lysine 80 functions as the Schiff-base intermediate with D-ribose 5-phosphate in the catalytic mechanism. Glycine 152 provides a ligand contact to D-ribose 5-phosphate. Arginine 164 is a binding site for D-glyceraldehyde 3-phosphate. Residues glycine 213 and glycine 234–serine 235 contribute to the D-ribose 5-phosphate site.

This sequence belongs to the PdxS/SNZ family. In terms of assembly, in the presence of PdxT, forms a dodecamer of heterodimers.

It carries out the reaction aldehydo-D-ribose 5-phosphate + D-glyceraldehyde 3-phosphate + L-glutamine = pyridoxal 5'-phosphate + L-glutamate + phosphate + 3 H2O + H(+). The protein operates within cofactor biosynthesis; pyridoxal 5'-phosphate biosynthesis. Functionally, catalyzes the formation of pyridoxal 5'-phosphate from ribose 5-phosphate (RBP), glyceraldehyde 3-phosphate (G3P) and ammonia. The ammonia is provided by the PdxT subunit. Can also use ribulose 5-phosphate and dihydroxyacetone phosphate as substrates, resulting from enzyme-catalyzed isomerization of RBP and G3P, respectively. The protein is Pyridoxal 5'-phosphate synthase subunit PdxS of Desulfovibrio desulfuricans (strain ATCC 27774 / DSM 6949 / MB).